A 583-amino-acid polypeptide reads, in one-letter code: Phytoene desaturase (583 aa).

Residues 1 to 20 (MAPPKHVIIIGAGAGGTATA) form the signal peptide. A helical membrane pass occupies residues 531–551 (IIWFLLIALFAATLVLFIAFP).

This sequence belongs to the carotenoid/retinoid oxidoreductase family. NAD(+) serves as cofactor.

Its subcellular location is the membrane. It carries out the reaction 15-cis-phytoene + 5 A = all-trans-3,4-didehydrolycopene + 5 AH2. It participates in carotenoid biosynthesis; lycopene biosynthesis. In terms of biological role, phytoene desaturase involved in the carotenoid biosynthesis pathway. Converts phytoene into 3,4-didehydrolycopene via the intermediary of phytofluene, zeta-carotene, neurosporene and lycopene, by introducing up to five double bonds into phytoene. This chain is Phytoene desaturase (carB), found in Phycomyces blakesleeanus (strain ATCC 8743b / DSM 1359 / FGSC 10004 / NBRC 33097 / NRRL 1555).